The chain runs to 368 residues: Cyclic GMP-AMP synthase-like receptor (368 aa).

Residues Ser60 and 72–74 (EYD) contribute to the ATP site. Mg(2+) is bound by residues Glu72, Asp74, and Asp190. GTP-binding positions include Asp190 and 229–236 (RASFYRQE). Residues 233–236 (YRQE), Lys254, and 268–272 (SYFIK) each bind ATP.

Belongs to the mab-21 family. The cofactor is Mg(2+). Requires Mn(2+) as cofactor.

The catalysed reaction is GTP + ATP = 3',2'-cGAMP + 2 diphosphate. The enzyme catalyses GTP + ATP = pppA(2'-5')pG + diphosphate. It catalyses the reaction pppA(2'-5')pG = 3',2'-cGAMP + diphosphate. Its activity is regulated as follows. The enzyme activity is specifically activated by double-stranded RNA (dsRNA). Functionally, nucleotidyltransferase that catalyzes the formation of cyclic GMP-AMP (3',2'-cGAMP) from ATP and GTP and plays a key role in innate immunity. Synthesizes 3',2'-cGAMP in a two-step reaction through production of the linear intermediate pppA(2'-5')pG. Acts as a key sensor of double-stranded RNA (dsRNA), the presence of dsRNA in the cytoplasm being a danger signal that triggers the immune responses. Directly binds dsRNA, activating the nucleotidyltransferase activity, leading to synthesis of 3',2'-cGAMP, a second messenger that binds to and activates Sting, thereby triggering the antiviral immune response via activation of the NF-kappa-B transcription factor Rel (Relish). The polypeptide is Cyclic GMP-AMP synthase-like receptor (Lucilia cuprina (Green bottle fly)).